Here is a 61-residue protein sequence, read N- to C-terminus: Progonadoliberin-1 (61 aa).

Residue Gln-1 is modified to Pyrrolidone carboxylic acid. Position 10 is a glycine amide (Gly-10).

Belongs to the GnRH family.

The protein localises to the secreted. In terms of biological role, stimulates the secretion of gonadotropins; it stimulates the secretion of both luteinizing and follicle-stimulating hormones. The protein is Progonadoliberin-1 (GNRH1) of Ovis aries (Sheep).